The primary structure comprises 246 residues: CTD nuclear envelope phosphatase 1 homolog (246 aa).

Residues 3–23 (TIAQSVFCFLAGFFNFFLLYF) traverse the membrane as a helical segment. The FCP1 homology domain occupies 53–220 (LTVKRKILVL…LNLLPFLDAL (168 aa)).

Belongs to the dullard family.

It localises to the membrane. Its subcellular location is the nucleus envelope. The enzyme catalyses O-phospho-L-seryl-[protein] + H2O = L-seryl-[protein] + phosphate. It carries out the reaction O-phospho-L-threonyl-[protein] + H2O = L-threonyl-[protein] + phosphate. In terms of biological role, serine/threonine protein phosphatase that may dephosphorylate and activate lipin-like phosphatases. Lipins are phosphatidate phosphatases that catalyze the conversion of phosphatidic acid to diacylglycerol and control the metabolism of fatty acids at different levels. May indirectly modulate the lipid composition of nuclear and/or endoplasmic reticulum membranes and be required for proper nuclear membrane morphology and/or dynamics. Contributes to closure of nuclear envelope (NE) holes and prevents excess nuclear membranes after meiosis and mitosis, possibly through spatial regulation of lipin. May limit the production of endoplasmic reticulum (ER) sheets proximal to the NE to prevent the ER membranes that feed into NE openings from invading the nuclear interior and thereby restrict nuclear transport to nuclear pore complexes (NPCs). May also indirectly regulate the production of lipid droplets and triacylglycerol. The polypeptide is CTD nuclear envelope phosphatase 1 homolog (cnep-1) (Caenorhabditis elegans).